Reading from the N-terminus, the 554-residue chain is Protein PNS1 (554 aa).

Composition is skewed to low complexity over residues 1-19 (MSGPQYGAQPGGYYNNNNN) and 27-45 (SYQMNPMPTDGNYGQQPQY). Positions 1-90 (MSGPQYGAQP…TDGYGGPPPS (90 aa)) are disordered. The Cytoplasmic portion of the chain corresponds to 1 to 105 (MSGPQYGAQP…KVQKPKYNDW (105 aa)). A compositionally biased stretch (pro residues) spans 68–90 (PQGPPPNGSKPPPTDGYGGPPPS). The chain crosses the membrane as a helical span at residues 106-126 (WAGLLFLATVAGFVAVSAISI). Residues 127 to 153 (HGYADNRSQNNGSLNGQRNTFGLTTHT) are Extracellular-facing. 2 N-linked (GlcNAc...) asparagine glycosylation sites follow: Asn-132 and Asn-137. Residues 154–174 (IYLFVWVLICAIVLSYAYMWM) traverse the membrane as a helical segment. Topologically, residues 175-181 (ARKFTKQ) are cytoplasmic. A helical transmembrane segment spans residues 182–202 (FIYATGILNIVMGLVTALYML). Residues 203 to 206 (SRKY) lie on the Extracellular side of the membrane. Residues 207-227 (WSGGIVFLIFVVLQALFFWSC) form a helical membrane-spanning segment. Over 228–255 (RSRIPFSTLMLQTAIDVSKVHGHVYLVS) the chain is Cytoplasmic. The helical transmembrane segment at 256–276 (AVGGVIGTLFAAYWAITLVAV) threads the bilayer. At 277–297 (YVKFEPDPNNAACRNAGGCSS) the chain is on the extracellular side. Residues 298–318 (GKVIGLIVFITFAGYWISEWL) form a helical membrane-spanning segment. At 319-352 (KNTIHTTVAGIYGSWYFNSRNYPTKVTRGALKRS) the chain is on the cytoplasmic side. Residues 353–373 (LTYSFGSISLGSLFIAIINLI) form a helical membrane-spanning segment. The Extracellular portion of the chain corresponds to 374–389 (RQLAQAAQQNAAQEGD). A helical transmembrane segment spans residues 390–410 (ILGTILWCIFGCLIGILDWLV). The Cytoplasmic portion of the chain corresponds to 411–451 (EFINRYAFCHIALYGKAYFAAAKDTWKMVKDRGIDALINEC). The chain crosses the membrane as a helical span at residues 452–472 (LIGPVLTFGATFVAYACGLIA). Residues 473-487 (YLYMVYTKPAYNDGG) lie on the Extracellular side of the membrane. A helical membrane pass occupies residues 488–508 (GFTPVVVAFAFLIGLQVCNVF). Over 509–554 (TTPLTSGIDTIFVAMAWDPEVLMRDHPDLYHRMVQVYPHVQEAIHA) the chain is Cytoplasmic.

The protein belongs to the CTL (choline transporter-like) family.

The protein localises to the cell membrane. Its function is as follows. Probably involved in transport through the plasma membrane. The polypeptide is Protein PNS1 (pns-1) (Neurospora crassa (strain ATCC 24698 / 74-OR23-1A / CBS 708.71 / DSM 1257 / FGSC 987)).